The chain runs to 486 residues: GDP-Man:Man(3)GlcNAc(2)-PP-Dol alpha-1,2-mannosyltransferase (486 aa).

The Lumenal segment spans residues 1 to 16 (MAGPMCLCGMMRLLTA). A helical membrane pass occupies residues 17-37 (LFIPVLITSVGLCLIFVLLFI). The Cytoplasmic portion of the chain corresponds to 38-229 (CTRLWVQRKK…SNNPVLSRLK (192 aa)). Residues 230-250 (LIYYYLFALFYGWVGSCSDVI) constitute an intramembrane region (helical). Residues 251–393 (MVNSTWTFSH…IGLHTMWNEH (143 aa)) are Cytoplasmic-facing. The helical intramembrane region spans 394–414 (FGIGIVECMAAGTIILAHNSG). The Cytoplasmic segment spans residues 415–486 (GPKLDIVVPH…FLASSEPLFK (72 aa)).

It belongs to the glycosyltransferase group 1 family. Glycosyltransferase 4 subfamily.

It is found in the endoplasmic reticulum membrane. The enzyme catalyses an alpha-D-Man-(1-&gt;3)-[alpha-D-Man-(1-&gt;6)]-beta-D-Man-(1-&gt;4)-beta-D-GlcNAc-(1-&gt;4)-alpha-D-GlcNAc-diphospho-di-trans,poly-cis-dolichol + 2 GDP-alpha-D-mannose = an alpha-D-Man-(1-&gt;2)-alpha-D-Man-(1-&gt;2)-alpha-D-Man-(1-&gt;3)-[alpha-D-Man-(1-&gt;6)]-beta-D-Man-(1-&gt;4)-beta-D-GlcNAc-(1-&gt;4)-alpha-D-GlcNAc-diphospho-di-trans,poly-cis-dolichol + 2 GDP + 2 H(+). It participates in protein modification; protein glycosylation. Its function is as follows. GDP-Man:Man(3)GlcNAc(2)-PP-Dol alpha-1,2-mannosyltransferase that operates in the biosynthetic pathway of dolichol-linked oligosaccharides, the glycan precursors employed in protein asparagine (N)-glycosylation. The assembly of dolichol-linked oligosaccharides begins on the cytosolic side of the endoplasmic reticulum membrane and finishes in its lumen. The sequential addition of sugars to dolichol pyrophosphate produces dolichol-linked oligosaccharides containing fourteen sugars, including two GlcNAcs, nine mannoses and three glucoses. Once assembled, the oligosaccharide is transferred from the lipid to nascent proteins by oligosaccharyltransferases. Catalyzes, on the cytoplasmic face of the endoplasmic reticulum, the addition of the fourth and fifth mannose residues to the dolichol-linked oligosaccharide chain, to produce Man(5)GlcNAc(2)-PP-dolichol core oligosaccharide. Man(5)GlcNAc(2)-PP-dolichol is a substrate for ALG3, the following enzyme in the biosynthetic pathway. This chain is GDP-Man:Man(3)GlcNAc(2)-PP-Dol alpha-1,2-mannosyltransferase (alg11), found in Xenopus laevis (African clawed frog).